Consider the following 119-residue polypeptide: Large ribosomal subunit protein bL20 (119 aa).

This sequence belongs to the bacterial ribosomal protein bL20 family.

Its function is as follows. Binds directly to 23S ribosomal RNA and is necessary for the in vitro assembly process of the 50S ribosomal subunit. It is not involved in the protein synthesizing functions of that subunit. This is Large ribosomal subunit protein bL20 from Vesicomyosocius okutanii subsp. Calyptogena okutanii (strain HA).